A 583-amino-acid polypeptide reads, in one-letter code: Moesin/ezrin/radixin homolog 1 (583 aa).

The 291-residue stretch at 11–301 folds into the FERM domain; sequence MNVRVTTMDA…GNHELYMRRR (291 aa). Disordered regions lie at residues 466–518 and 539–558; these read TTTP…RTLA and RDDT…VRQG. Over residues 476–485 the composition is skewed to acidic residues; that stretch reads EEEEDNEEEL. Positions 496-518 are enriched in basic and acidic residues; that stretch reads DYSKDFDTDEHIKDPVEERRTLA. At Thr564 the chain carries Phosphothreonine.

In terms of assembly, interacts with cytoskeletal actin.

Its subcellular location is the cell junction. The protein localises to the adherens junction. It is found in the cell projection. The protein resides in the microvillus. It localises to the rhabdomere. Its subcellular location is the cell membrane. The protein localises to the cytoplasm. It is found in the cytoskeleton. Its function is as follows. Involved in connections of major cytoskeletal structures to the plasma membrane. The sequence is that of Moesin/ezrin/radixin homolog 1 from Aedes aegypti (Yellowfever mosquito).